Consider the following 66-residue polypeptide: Muscarinic toxin 1 (66 aa).

Disulfide bonds link Cys-3-Cys-24, Cys-17-Cys-42, Cys-46-Cys-58, and Cys-59-Cys-64.

Belongs to the three-finger toxin family. Short-chain subfamily. Aminergic toxin sub-subfamily. In terms of tissue distribution, expressed by the venom gland.

Its subcellular location is the secreted. Shows a non-competitive interaction with adrenergic and muscarinic receptors. Binds to alpha-2b (ADRA2B) (IC(50)=2.3 nM), alpha-1a (ADRA1A), alpha-1b (ADRA1B), and alpha-2c (ADRA2C) adrenergic receptors. Reversibly binds to M1 (CHRM1) muscarinic acetylcholine receptors, probably by interacting with the orthosteric site. Also reveals a slightly weaker effect at M3 (CHRM3) and M4 (CHRM4) receptors. The order of potency is ADRA2B&gt;&gt;CHRM1&gt;ADRA1A&gt;ADRA1B&gt;ADRA2C/CHRM4. The sequence is that of Muscarinic toxin 1 from Dendroaspis angusticeps (Eastern green mamba).